The chain runs to 250 residues: 3-deoxy-manno-octulosonate cytidylyltransferase (250 aa).

The protein belongs to the KdsB family.

It is found in the cytoplasm. It carries out the reaction 3-deoxy-alpha-D-manno-oct-2-ulosonate + CTP = CMP-3-deoxy-beta-D-manno-octulosonate + diphosphate. Its pathway is nucleotide-sugar biosynthesis; CMP-3-deoxy-D-manno-octulosonate biosynthesis; CMP-3-deoxy-D-manno-octulosonate from 3-deoxy-D-manno-octulosonate and CTP: step 1/1. It participates in bacterial outer membrane biogenesis; lipopolysaccharide biosynthesis. Functionally, activates KDO (a required 8-carbon sugar) for incorporation into bacterial lipopolysaccharide in Gram-negative bacteria. In Actinobacillus pleuropneumoniae serotype 7 (strain AP76), this protein is 3-deoxy-manno-octulosonate cytidylyltransferase.